We begin with the raw amino-acid sequence, 260 residues long: Taurine import ATP-binding protein TauB (260 aa).

The region spanning 6–235 is the ABC transporter domain; that stretch reads AHQVSVVYAS…RYAAGESMRS (230 aa). 40–47 is an ATP binding site; that stretch reads GASGCGKS.

The protein belongs to the ABC transporter superfamily. Taurine importer (TC 3.A.1.17.1) family. In terms of assembly, the complex is composed of two ATP-binding proteins (TauB), two transmembrane proteins (TauC) and a solute-binding protein (TauA).

The protein resides in the cell inner membrane. It catalyses the reaction taurine(out) + ATP + H2O = taurine(in) + ADP + phosphate + H(+). Its function is as follows. Part of the ABC transporter complex TauABC involved in taurine import. Responsible for energy coupling to the transport system. This chain is Taurine import ATP-binding protein TauB, found in Burkholderia thailandensis (strain ATCC 700388 / DSM 13276 / CCUG 48851 / CIP 106301 / E264).